The chain runs to 59 residues: Inner kinetochore subunit fta6 (59 aa).

As to quaternary structure, component of the inner kinetochore constitutive centromere-associated network (CCAN) (also known as central kinetochore Sim4 complex in fission yeast), which is composed of at least cnl2, cnp3, cnp20, fta1, fta2, fta3, fta4, fta6, fta7, mal2, mhf1, mhf2, mis6, mis15, mis17, sim4 and wip1.

The protein resides in the nucleus. The protein localises to the chromosome. It is found in the centromere. Its subcellular location is the kinetochore. It localises to the cytoplasm. The protein resides in the cytoskeleton. The protein localises to the microtubule organizing center. It is found in the spindle pole body. Component of the kinetochore, a multiprotein complex that assembles on centromeric DNA and attaches chromosomes to spindle microtubules, mediating chromosome segregation and sister chromatid segregation during meiosis and mitosis. Component of the inner kinetochore constitutive centromere-associated network (CCAN), which serves as a structural platform for outer kinetochore assembly. This chain is Inner kinetochore subunit fta6 (fta6), found in Schizosaccharomyces pombe (strain 972 / ATCC 24843) (Fission yeast).